A 103-amino-acid polypeptide reads, in one-letter code: Putative truncated guanine nucleotide exchange factor YLL017W (103 aa).

Residues 26 to 97 (QPIDVVECTY…PPSFYTVHSK (72 aa)) enclose the SH3 domain.

The chain is Putative truncated guanine nucleotide exchange factor YLL017W from Saccharomyces cerevisiae (strain ATCC 204508 / S288c) (Baker's yeast).